We begin with the raw amino-acid sequence, 436 residues long: tRNA modification GTPase MnmE (436 aa).

(6S)-5-formyl-5,6,7,8-tetrahydrofolate-binding residues include R20, E77, and K117. In terms of domain architecture, TrmE-type G spans 214–360 (GLKIVIAGAP…FIKELESFCL (147 aa)). GTP is bound by residues 224–229 (NSGKSS), 243–249 (MEEAGTT), and 268–271 (DTAG). S228 and T249 together coordinate Mg(2+). K436 is a binding site for (6S)-5-formyl-5,6,7,8-tetrahydrofolate.

This sequence belongs to the TRAFAC class TrmE-Era-EngA-EngB-Septin-like GTPase superfamily. TrmE GTPase family. Homodimer. Heterotetramer of two MnmE and two MnmG subunits. The cofactor is K(+).

The protein localises to the cytoplasm. Exhibits a very high intrinsic GTPase hydrolysis rate. Involved in the addition of a carboxymethylaminomethyl (cmnm) group at the wobble position (U34) of certain tRNAs, forming tRNA-cmnm(5)s(2)U34. This chain is tRNA modification GTPase MnmE, found in Bartonella quintana (strain Toulouse) (Rochalimaea quintana).